Reading from the N-terminus, the 805-residue chain is Leucine--tRNA ligase (805 aa).

The 'HIGH' region signature appears at 40–51; the sequence is PYPSGSGLHVGH. The 'KMSKS' region motif lies at 576-580; sequence KMSKS. An ATP-binding site is contributed by lysine 579.

This sequence belongs to the class-I aminoacyl-tRNA synthetase family.

It is found in the cytoplasm. The enzyme catalyses tRNA(Leu) + L-leucine + ATP = L-leucyl-tRNA(Leu) + AMP + diphosphate. The sequence is that of Leucine--tRNA ligase from Chloroherpeton thalassium (strain ATCC 35110 / GB-78).